The primary structure comprises 154 residues: Ribonuclease H (154 aa).

The RNase H type-1 domain occupies 3 to 144; that stretch reads ELPVVTIYTD…ADQLARDGIV (142 aa). The Mg(2+) site is built by D12, E50, D72, and D136.

Belongs to the RNase H family. As to quaternary structure, monomer. Mg(2+) is required as a cofactor.

The protein resides in the cytoplasm. It catalyses the reaction Endonucleolytic cleavage to 5'-phosphomonoester.. Its function is as follows. Endonuclease that specifically degrades the RNA of RNA-DNA hybrids. This Bradyrhizobium diazoefficiens (strain JCM 10833 / BCRC 13528 / IAM 13628 / NBRC 14792 / USDA 110) protein is Ribonuclease H.